Consider the following 435-residue polypeptide: Galactomannan galactosyltransferase 1 (435 aa).

Residues 1 to 20 lie on the Cytoplasmic side of the membrane; that stretch reads MAKFGSRNKSPKWISNGCCF. The helical; Signal-anchor for type II membrane protein transmembrane segment at 21–41 threads the bilayer; it reads LLGAFTALLLLWGLCSFIIPI. At 42 to 435 the chain is on the lumenal side; the sequence is PNTDPKLNSV…SPLPFGYPAA (394 aa). N-linked (GlcNAc...) asparagine glycans are attached at residues asparagine 230 and asparagine 328. Residues 321-354 are a coiled coil; the sequence is EIVKTYENISERYDEVERKVEGLRRRHAEKVSEK.

This sequence belongs to the glycosyltransferase 34 family.

The protein localises to the golgi apparatus membrane. Functionally, galactomannan galactosyltransferase (GMGT) involved in galactomannan biosynthesis in seed endosperm. GMGT specificity is an important factor regulating the distribution and amount of alpha-1,6-galactose (Gal) substitution of the beta-1,4-linked mannan backbone. The protein is Galactomannan galactosyltransferase 1 (GMGT1) of Cyamopsis tetragonoloba (Guar).